The following is a 187-amino-acid chain: CRISPR system Cmr subunit Cmr1-2 (187 aa).

Belongs to the CRISPR system Cmr1 family. As to quaternary structure, part of the type III-B Cmr ribonucleoprotein (RNP) complex. This is an elongated RNP with Cmr2 and Cmr3 as the base, with Cmr4 and Cmr5 forming a helical core along the mature crRNA (39 or 45 nt in length), while the complex is capped by Cmr6 and Cmr1. The 5' end of the crRNA is bound to Cmr2 and Cmr3, while Cmr6 and a Cmr1 subunit (Cmr1-1 or Cmr1-2) cap the 3' end of the crRNA. The target RNA lies antiparallel to the crRNA, with its 5' end near Cmr1 and Cmr6 and its 3' end near Cmr2 and Cmr3; major target cleavage occurs nears the junction of Cmr1/Cmr6 and Cmr4/Cmr, with minor cleavage occurring at 6 nt intervals which coincide with the proposed spacing of Cmr4 subunits.

Its subcellular location is the cytoplasm. Its function is as follows. CRISPR (clustered regularly interspaced short palindromic repeat), is an adaptive immune system that provides protection against mobile genetic elements (viruses, transposable elements and conjugative plasmids). CRISPR clusters contain sequences complementary to antecedent mobile elements and target invading nucleic acids. CRISPR clusters are transcribed and processed into CRISPR RNA (crRNA), formerly called psiRNA (prokaryotic silencing) in this organism. Part of the Cmr ribonucleoprotein complex which has divalent cation-dependent endoribonuclease activity specific for ssRNA complementary to the crRNA (target RNA), generating 5' hydroxy- and 3' phosphate or 2'-3' cyclic phosphate termini. Cmr4 is probably the subunit that cleaves target RNA. Cmr complex does not cleave ssDNA complementary to the crRNA. Cleavage of invading RNA is guided by the crRNA; substrate cleavage occurs a fixed distance (14 nt) from the 3' end of the crRNA. In vitro reconstitution shows Cmr1-2 and Cmr5 are not absolutely necessary for target cleavage. In Pyrococcus furiosus (strain ATCC 43587 / DSM 3638 / JCM 8422 / Vc1), this protein is CRISPR system Cmr subunit Cmr1-2.